The primary structure comprises 215 residues: Peptide methionine sulfoxide reductase MsrA (215 aa).

Cys58 is a catalytic residue.

This sequence belongs to the MsrA Met sulfoxide reductase family.

The enzyme catalyses L-methionyl-[protein] + [thioredoxin]-disulfide + H2O = L-methionyl-(S)-S-oxide-[protein] + [thioredoxin]-dithiol. It carries out the reaction [thioredoxin]-disulfide + L-methionine + H2O = L-methionine (S)-S-oxide + [thioredoxin]-dithiol. Its function is as follows. Has an important function as a repair enzyme for proteins that have been inactivated by oxidation. Catalyzes the reversible oxidation-reduction of methionine sulfoxide in proteins to methionine. The polypeptide is Peptide methionine sulfoxide reductase MsrA (Pseudomonas aeruginosa (strain LESB58)).